A 231-amino-acid polypeptide reads, in one-letter code: Two-component response regulator ORR1 (231 aa).

The Response regulatory domain maps to 9-135; the sequence is RVLLVDDSPV…DVQRLRNCSP (127 aa). Asp68 carries the 4-aspartylphosphate modification.

Belongs to the ARR family. Type-A subfamily. Post-translationally, two-component system major event consists of a His-to-Asp phosphorelay between a sensor histidine kinase (HK) and a response regulator (RR). In plants, the His-to-Asp phosphorelay involves an additional intermediate named Histidine-containing phosphotransfer protein (HPt). This multistep phosphorelay consists of a His-Asp-His-Asp sequential transfer of a phosphate group between first a His and an Asp of the HK protein, followed by the transfer to a conserved His of the HPt protein and finally the transfer to an Asp in the receiver domain of the RR protein. In terms of tissue distribution, expressed in roots, leaf blades, leaf sheaths, shoot apex, flowers and panicles.

In terms of biological role, functions as a response regulator involved in His-to-Asp phosphorelay signal transduction system. Phosphorylation of the Asp residue in the receiver domain activates the ability of the protein to promote the transcription of target genes. Type-A response regulators seem to act as negative regulators of the cytokinin signaling. Involved in adventitious (crown) root initiation under the regulation of CRL5. This chain is Two-component response regulator ORR1, found in Oryza sativa subsp. japonica (Rice).